The chain runs to 416 residues: Glyceraldehyde-3-phosphate dehydrogenase, chloroplastic (416 aa).

The transit peptide at M1 to S78 directs the protein to the chloroplast. Residues R90–I91, D114, and R158 contribute to the NADP(+) site. D-glyceraldehyde 3-phosphate contacts are provided by residues S232–T234, T263, R278, T291–G292, and R314. The active-site Nucleophile is the C233. NADP(+) is bound at residue N396.

Belongs to the glyceraldehyde-3-phosphate dehydrogenase family. In terms of assembly, homotetramer.

The protein resides in the plastid. It is found in the chloroplast. It carries out the reaction D-glyceraldehyde 3-phosphate + phosphate + NADP(+) = (2R)-3-phospho-glyceroyl phosphate + NADPH + H(+). Its pathway is carbohydrate biosynthesis; Calvin cycle. The sequence is that of Glyceraldehyde-3-phosphate dehydrogenase, chloroplastic (GAPA) from Gracilaria gracilis (Red alga).